A 366-amino-acid polypeptide reads, in one-letter code: D-alanine--D-alanine ligase (366 aa).

The ATP-grasp domain occupies Lys-140–Asp-346. Residue Glu-173–Glu-228 participates in ATP binding. The Mg(2+) site is built by Asp-299, Glu-313, and Asn-315.

This sequence belongs to the D-alanine--D-alanine ligase family. The cofactor is Mg(2+). Mn(2+) is required as a cofactor.

It is found in the cytoplasm. It carries out the reaction 2 D-alanine + ATP = D-alanyl-D-alanine + ADP + phosphate + H(+). It functions in the pathway cell wall biogenesis; peptidoglycan biosynthesis. Its function is as follows. Cell wall formation. This is D-alanine--D-alanine ligase from Heliobacterium modesticaldum (strain ATCC 51547 / Ice1).